The sequence spans 316 residues: Putative ubiquitin-conjugating enzyme E2 39 (316 aa).

One can recognise a UBC core domain in the interval 57-217 (NWVKDIQKEW…VFVFSLKTMH (161 aa)). The active-site Glycyl thioester intermediate is Cys143.

This sequence belongs to the ubiquitin-conjugating enzyme family.

It catalyses the reaction S-ubiquitinyl-[E1 ubiquitin-activating enzyme]-L-cysteine + [E2 ubiquitin-conjugating enzyme]-L-cysteine = [E1 ubiquitin-activating enzyme]-L-cysteine + S-ubiquitinyl-[E2 ubiquitin-conjugating enzyme]-L-cysteine.. It participates in protein modification; protein ubiquitination. In terms of biological role, accepts the ubiquitin from the E1 complex and catalyzes its covalent attachment to other proteins. The protein is Putative ubiquitin-conjugating enzyme E2 39 (UBC39) of Arabidopsis thaliana (Mouse-ear cress).